A 587-amino-acid polypeptide reads, in one-letter code: Trans-activating transcriptional regulatory protein (587 aa).

It belongs to the nucleopolyhedrovirus IE-1 protein family.

Functionally, regulatory transcriptional protein, which trans-activates gene expression from early baculovirus promoters. Can also trans-activate its own promoter, suggesting that it is autoregulated during normal infection of insect cells. This is Trans-activating transcriptional regulatory protein (IE1) from Bombyx mori nuclear polyhedrosis virus (BmNPV).